The sequence spans 161 residues: Peptidyl-prolyl cis-trans isomerase-like 1 (161 aa).

The PPIase cyclophilin-type domain maps to 1–155 (MATDVVFDTS…DEVKIIRAKV (155 aa)).

This sequence belongs to the cyclophilin-type PPIase family. PPIL1 subfamily.

The enzyme catalyses [protein]-peptidylproline (omega=180) = [protein]-peptidylproline (omega=0). PPIases accelerate the folding of proteins. It catalyzes the cis-trans isomerization of proline imidic peptide bonds in oligopeptides. In Aspergillus fumigatus (strain ATCC MYA-4609 / CBS 101355 / FGSC A1100 / Af293) (Neosartorya fumigata), this protein is Peptidyl-prolyl cis-trans isomerase-like 1 (cyp1).